The chain runs to 216 residues: Octanoyltransferase (216 aa).

Positions 32 to 207 constitute a BPL/LPL catalytic domain; the sequence is ENSPDELWLV…TFSQLLGYEH (176 aa). Substrate is bound by residues 71 to 78, 138 to 140, and 151 to 153; these read RGGQVTYH, SLG, and GLA. The active-site Acyl-thioester intermediate is the cysteine 169.

Belongs to the LipB family.

The protein localises to the cytoplasm. The enzyme catalyses octanoyl-[ACP] + L-lysyl-[protein] = N(6)-octanoyl-L-lysyl-[protein] + holo-[ACP] + H(+). The protein operates within protein modification; protein lipoylation via endogenous pathway; protein N(6)-(lipoyl)lysine from octanoyl-[acyl-carrier-protein]: step 1/2. Its function is as follows. Catalyzes the transfer of endogenously produced octanoic acid from octanoyl-acyl-carrier-protein onto the lipoyl domains of lipoate-dependent enzymes. Lipoyl-ACP can also act as a substrate although octanoyl-ACP is likely to be the physiological substrate. In Shewanella amazonensis (strain ATCC BAA-1098 / SB2B), this protein is Octanoyltransferase.